Reading from the N-terminus, the 541-residue chain is MAKSLLFGEQARRSMEAGVDKLADTVRVTLGPKGRNVVLDKKFGSPLITNDGVTIAREIELEDPYENMGAQLVKEVATKTNDVAGDGTTTATLLAQAIIREGLKNVTAGANPIQIRTGIRKAVEKAVEEIKVISKPVNGKEDIARVAAISAASEEVGKLIADAMERVGNDGVITVEESKSMGTDLEVVEGMQFDRGYVSAYMVTDTEKMEAVLDDVYILITDKKISNIQEILPILEQIVQQGKKLLIISEDIEGEALSTLVLNKLRGTFTCVGVKAPGFGDRRKEMLQDIAILTGGEVISEELGRDLKDVTIDMLGTADSVKVTKENTTIVNGKGDKVAIKERVSQIRVQIEDTTSEFDKEKLQERLAKLAGGVAVIRVGAATETELKEEKLRIEDALAATKAAVEEGIVPGGGTAYIDIIPKIADLTSDIIDVKLGIDIIRKALEEPVRQIANNAGAEGSVIIEKVKATEAGVGYDALNDKYVDMLKTGIVDPTKVTRSALQNAASIASTFLTTEAAVADIPEKENTPPMAPGMGMDGMY.

ATP-binding positions include 29-32 (TLGP), 86-90 (DGTTT), Gly413, 477-479 (DAL), and Asp493.

Belongs to the chaperonin (HSP60) family. Forms a cylinder of 14 subunits composed of two heptameric rings stacked back-to-back. Interacts with the co-chaperonin GroES.

Its subcellular location is the cytoplasm. The catalysed reaction is ATP + H2O + a folded polypeptide = ADP + phosphate + an unfolded polypeptide.. In terms of biological role, together with its co-chaperonin GroES, plays an essential role in assisting protein folding. The GroEL-GroES system forms a nano-cage that allows encapsulation of the non-native substrate proteins and provides a physical environment optimized to promote and accelerate protein folding. The protein is Chaperonin GroEL of Clostridium botulinum (strain ATCC 19397 / Type A).